The primary structure comprises 571 residues: MSFKMTQSQYTSLYGPTVGDSVRLGDTNLFAQVEKDYANYGDEATFGGGKSIRDGMAQNPNVTRDDKNVADLVLTNALIIDYDKIVKADIGIKNGYIFKIGKAGNPDIMDNVDIIIGATTDIIAAEGKIVTAGGIDTHVHFINPEQAEVALESGITTHIGGGTGASEGAKATTVTPGPWHIHRMLEAAEEMPINVGFTGKGQAVNHTALIEQIHAGAIGLKVHEDWGATPSALSHALDVADEFDVQVALHADTLNEAGFMEDTMAAVKDRVLHMYHTEGAGGGHAPDLIKSAAYSNILPSSTNPTLPYTHNTVDEHLDMVMITHHLNASIPEDIAFADSRIRKETIAAEDVLQDMGVFSMVSSDSQAMGRVGEVVTRTWQVAHRMKEQRGPLDGDFEYHDNNRIKRYIAKYTINPAITHGISDYVGSVEAGKLADLVMWEPEFFGAKPDLVVKGGMINSAVNGDANGSIPTSEPLKYRKMYGQFGGNITHTAMTFVSNTAYENGIYRQLNLKRMVRPVRNIRNLTKADMKNNNATPKIDVDPQTYEVFVDGNKITSEAATELPLTQRYFLF.

The Urease domain maps to 133 to 571 (GGIDTHVHFI…LPLTQRYFLF (439 aa)). 3 residues coordinate Ni(2+): His138, His140, and Lys221. The residue at position 221 (Lys221) is an N6-carboxylysine. His223 contributes to the substrate binding site. Ni(2+)-binding residues include His250 and His276. Residue His324 is the Proton donor of the active site. A Ni(2+)-binding site is contributed by Asp364.

Belongs to the metallo-dependent hydrolases superfamily. Urease alpha subunit family. In terms of assembly, heterotrimer of UreA (gamma), UreB (beta) and UreC (alpha) subunits. Three heterotrimers associate to form the active enzyme. Ni cation is required as a cofactor. In terms of processing, carboxylation allows a single lysine to coordinate two nickel ions.

Its subcellular location is the cytoplasm. The enzyme catalyses urea + 2 H2O + H(+) = hydrogencarbonate + 2 NH4(+). The protein operates within nitrogen metabolism; urea degradation; CO(2) and NH(3) from urea (urease route): step 1/1. The polypeptide is Urease subunit alpha (Staphylococcus epidermidis (strain ATCC 35984 / DSM 28319 / BCRC 17069 / CCUG 31568 / BM 3577 / RP62A)).